We begin with the raw amino-acid sequence, 230 residues long: Large ribosomal subunit protein uL4 (230 aa).

The interval 51-105 (RAAARQGTHSTKTRGDVSGGGRKPYRQKGTGRARQGSMRAPQFTGGGIVHGPKLR) is disordered.

The protein belongs to the universal ribosomal protein uL4 family. In terms of assembly, part of the 50S ribosomal subunit.

In terms of biological role, one of the primary rRNA binding proteins, this protein initially binds near the 5'-end of the 23S rRNA. It is important during the early stages of 50S assembly. It makes multiple contacts with different domains of the 23S rRNA in the assembled 50S subunit and ribosome. Forms part of the polypeptide exit tunnel. The sequence is that of Large ribosomal subunit protein uL4 from Mycobacterium leprae (strain Br4923).